Here is a 165-residue protein sequence, read N- to C-terminus: UPF0254 protein MmarC6_1720 (165 aa).

The protein belongs to the UPF0254 family.

In Methanococcus maripaludis (strain C6 / ATCC BAA-1332), this protein is UPF0254 protein MmarC6_1720.